Reading from the N-terminus, the 88-residue chain is Cytochrome c oxidase subunit 6B2 (88 aa).

The tract at residues 1–21 is disordered; the sequence is MLGVQAQMPAPGQWTTPPFDP. One can recognise a CHCH domain in the interval 29–75; it reads TRNCYQNFLDYHRCVKTMDRRGKNTQACDYYFRVFHSLCPVSWVQRW. The Cx9C motif motif lies at 32 to 42; sequence CYQNFLDYHRC. 2 disulfides stabilise this stretch: Cys-32–Cys-67 and Cys-42–Cys-56. The short motif at 56–67 is the Cx10C motif element; that stretch reads CDYYFRVFHSLC.

The protein belongs to the cytochrome c oxidase subunit 6B family. In terms of assembly, component of the cytochrome c oxidase (complex IV, CIV), a multisubunit enzyme composed of 14 subunits. The complex is composed of a catalytic core of 3 subunits MT-CO1, MT-CO2 and MT-CO3, encoded in the mitochondrial DNA, and 11 supernumerary subunits COX4I, COX5A, COX5B, COX6A, COX6B, COX6C, COX7A, COX7B, COX7C, COX8 and NDUFA4, which are encoded in the nuclear genome. The complex exists as a monomer or a dimer and forms supercomplexes (SCs) in the inner mitochondrial membrane with NADH-ubiquinone oxidoreductase (complex I, CI) and ubiquinol-cytochrome c oxidoreductase (cytochrome b-c1 complex, complex III, CIII), resulting in different assemblies (supercomplex SCI(1)III(2)IV(1) and megacomplex MCI(2)III(2)IV(2)). As to expression, testis specific.

Its subcellular location is the mitochondrion inner membrane. The protein operates within energy metabolism; oxidative phosphorylation. Functionally, component of the cytochrome c oxidase, the last enzyme in the mitochondrial electron transport chain which drives oxidative phosphorylation. The respiratory chain contains 3 multisubunit complexes succinate dehydrogenase (complex II, CII), ubiquinol-cytochrome c oxidoreductase (cytochrome b-c1 complex, complex III, CIII) and cytochrome c oxidase (complex IV, CIV), that cooperate to transfer electrons derived from NADH and succinate to molecular oxygen, creating an electrochemical gradient over the inner membrane that drives transmembrane transport and the ATP synthase. Cytochrome c oxidase is the component of the respiratory chain that catalyzes the reduction of oxygen to water. Electrons originating from reduced cytochrome c in the intermembrane space (IMS) are transferred via the dinuclear copper A center (CU(A)) of subunit 2 and heme A of subunit 1 to the active site in subunit 1, a binuclear center (BNC) formed by heme A3 and copper B (CU(B)). The BNC reduces molecular oxygen to 2 water molecules using 4 electrons from cytochrome c in the IMS and 4 protons from the mitochondrial matrix. The protein is Cytochrome c oxidase subunit 6B2 (Cox6b2) of Rattus norvegicus (Rat).